The following is a 385-amino-acid chain: Nod factor hydrolase protein 1 (385 aa).

The signal sequence occupies residues 1–21 (MANFLKLKQFLTLVLILLALA). The region spanning 36–385 (RVKGIYWIEN…TASKAWRPES (350 aa)) is the GH18 domain. Residues N115 and N134 are each glycosylated (N-linked (GlcNAc...) asparagine). E153 serves as the catalytic Proton donor. Residues N233 and N247 are each glycosylated (N-linked (GlcNAc...) asparagine).

This sequence belongs to the glycosyl hydrolase 18 family. Chitinase class V subfamily.

In terms of biological role, symbiotic enzyme that hydrolytically inactivates Nod factors (NFs) with a C16:2 acyl chain produced by the microsymbiont Sinorhizobium meliloti. NFs are lipo-chitooligosaccharide signaling molecules produced by nitrogen-fixing rhizobia to initiate nodulation (symbiosis) on the roots of legumes. Controls NF hydrolysis at the stage of root hair infection. Involved in the regulation of growth and branching of mature nodules. Modulates NF levels and signaling to complete transition of infected nodules to functional nitrogen-fixing organs. Lacks chitinase activity in vitro toward glycol chitin, carboxymethyl-chitin, colloidal chitin, and the chitin oligosaccharides (N-acetylglucosamine) (GlcNAc)6 and (GlcNAc)5. This chain is Nod factor hydrolase protein 1, found in Medicago truncatula (Barrel medic).